Reading from the N-terminus, the 214-residue chain is uncharacterized protein (214 aa).

A run of 2 helical transmembrane segments spans residues 23–43 (ILVGACAAVWLVFTGVSVAAA) and 65–85 (VLYAVIVVSALVIVGAIPVLL). Residues 96–115 (ATRPTGASVRGGRSIGSGHP) form a disordered region. 2 helical membrane-spanning segments follow: residues 152–172 (VVLTSAIGIALIAVAAATYLM) and 181–201 (WISYGLAGVVTAGMPVIEWLY).

Its subcellular location is the cell membrane. This is an uncharacterized protein from Mycobacterium tuberculosis (strain CDC 1551 / Oshkosh).